Consider the following 496-residue polypeptide: Pre-glycoprotein polyprotein GP complex (496 aa).

Gly2 is lipidated: N-myristoyl glycine; by host. The Extracellular portion of the chain corresponds to 2 to 17 (GQLISFFQEIPVFLQE). The helical transmembrane segment at 18-32 (ALNIALVAVSLIAVI) threads the bilayer. Lys33 is a topological domain (cytoplasmic). A helical transmembrane segment spans residues 34 to 53 (GIINLYKSGLFQFIFFLLLA). Extracellular segments follow at residues 54 to 58 (GRSCS) and 59 to 435 (DGTF…TLVD). A Zn(2+)-binding site is contributed by Cys57. Residues Asn83, Asn95, Asn137, Asn166, and Asn178 are each glycosylated (N-linked (GlcNAc...) asparagine; by host). Cystine bridges form between Cys92/Cys237, Cys135/Cys164, Cys207/Cys213, Cys282/Cys295, Cys304/Cys313, and Cys367/Cys388. Asn368, Asn376, Asn393, and Asn398 each carry an N-linked (GlcNAc...) asparagine; by host glycan. Residues 436-456 (ICFWSTVFFTASLFLHLVGIP) form a helical membrane-spanning segment. Topologically, residues 457–496 (THRHLKGEACPLPHKLDSFGGCRCGKYPRLRKPTIWHKRH) are cytoplasmic. The Zn(2+) site is built by His458, His460, Cys466, His470, Cys478, Cys480, and His496.

Belongs to the arenaviridae GPC protein family. Homotetramer; disulfide-linked. Interacts with host TFRC. As to quaternary structure, homotetramer. GP2 homotetramers bind through ionic interactions with GP1 homotetramers to form the GP complex together with the stable signal peptide. The GP-C polyprotein interacts with the host protease MBTPS1/SKI-1 resulting in the polyprotein processing. In terms of processing, specific enzymatic cleavages in vivo yield mature proteins. GP-C polyprotein is cleaved in the endoplasmic reticulum by the host protease MBTPS1. Only cleaved glycoprotein is incorporated into virions. Post-translationally, the SSP remains stably associated with the GP complex following cleavage by signal peptidase and plays crucial roles in the trafficking of GP through the secretory pathway. Myristoylation is necessary for GP2-mediated fusion activity.

It localises to the virion membrane. The protein resides in the host endoplasmic reticulum membrane. The protein localises to the host Golgi apparatus membrane. It is found in the host cell membrane. In terms of biological role, class I viral fusion protein that directs fusion of viral and host endosomal membranes, leading to delivery of the nucleocapsid into the cytoplasm. Membrane fusion is mediated by irreversible conformational changes induced upon acidification in the endosome. Its function is as follows. Stable signal peptide (SSP): cleaved and functions as a signal peptide. In addition, it is also retained as the third component of the GP complex. The SSP is required for efficient glycoprotein expression, post-translational maturation cleavage of GP1 and GP2, glycoprotein transport to the cell surface plasma membrane, formation of infectious virus particles, and acid pH-dependent glycoprotein-mediated cell fusion. Functionally, interacts with the host receptor. Mediates virus attachment to host TFRC. This attachment induces virion internalization predominantly through clathrin-mediated endocytosis. The polypeptide is Pre-glycoprotein polyprotein GP complex (Machupo virus (MACV)).